A 253-amino-acid chain; its full sequence is Tryptophan synthase alpha chain (253 aa).

Active-site proton acceptor residues include Glu-46 and Asp-57.

This sequence belongs to the TrpA family. Tetramer of two alpha and two beta chains.

It catalyses the reaction (1S,2R)-1-C-(indol-3-yl)glycerol 3-phosphate + L-serine = D-glyceraldehyde 3-phosphate + L-tryptophan + H2O. Its pathway is amino-acid biosynthesis; L-tryptophan biosynthesis; L-tryptophan from chorismate: step 5/5. The alpha subunit is responsible for the aldol cleavage of indoleglycerol phosphate to indole and glyceraldehyde 3-phosphate. The chain is Tryptophan synthase alpha chain from Dictyoglomus thermophilum (strain ATCC 35947 / DSM 3960 / H-6-12).